Consider the following 162-residue polypeptide: NADH-quinone oxidoreductase subunit I (162 aa).

2 4Fe-4S ferredoxin-type domains span residues 53–83 and 93–122; these read LRRY…IDSE and TRYD…ETRI. [4Fe-4S] cluster-binding residues include C63, C66, C69, C73, C102, C105, C108, and C112.

The protein belongs to the complex I 23 kDa subunit family. In terms of assembly, NDH-1 is composed of 14 different subunits. Subunits NuoA, H, J, K, L, M, N constitute the membrane sector of the complex. [4Fe-4S] cluster is required as a cofactor.

Its subcellular location is the cell inner membrane. It carries out the reaction a quinone + NADH + 5 H(+)(in) = a quinol + NAD(+) + 4 H(+)(out). In terms of biological role, NDH-1 shuttles electrons from NADH, via FMN and iron-sulfur (Fe-S) centers, to quinones in the respiratory chain. The immediate electron acceptor for the enzyme in this species is believed to be ubiquinone. Couples the redox reaction to proton translocation (for every two electrons transferred, four hydrogen ions are translocated across the cytoplasmic membrane), and thus conserves the redox energy in a proton gradient. This Thiobacillus denitrificans (strain ATCC 25259 / T1) protein is NADH-quinone oxidoreductase subunit I.